The primary structure comprises 337 residues: Anthranilate phosphoribosyltransferase (337 aa).

Residues Gly81, 84–85 (GD), Ser89, 91–94 (NVST), 109–117 (KHGNRALSS), and Ala121 each bind 5-phospho-alpha-D-ribose 1-diphosphate. An anthranilate-binding site is contributed by Gly81. Ser93 is a Mg(2+) binding site. Asn112 contributes to the anthranilate binding site. Arg167 serves as a coordination point for anthranilate. Mg(2+)-binding residues include Asp226 and Glu227.

This sequence belongs to the anthranilate phosphoribosyltransferase family. Homodimer. Mg(2+) serves as cofactor.

It catalyses the reaction N-(5-phospho-beta-D-ribosyl)anthranilate + diphosphate = 5-phospho-alpha-D-ribose 1-diphosphate + anthranilate. The protein operates within amino-acid biosynthesis; L-tryptophan biosynthesis; L-tryptophan from chorismate: step 2/5. Its function is as follows. Catalyzes the transfer of the phosphoribosyl group of 5-phosphorylribose-1-pyrophosphate (PRPP) to anthranilate to yield N-(5'-phosphoribosyl)-anthranilate (PRA). This chain is Anthranilate phosphoribosyltransferase, found in Bradyrhizobium sp. (strain BTAi1 / ATCC BAA-1182).